We begin with the raw amino-acid sequence, 264 residues long: Transcription initiation factor TFIID subunit 9 (264 aa).

N6-acetyllysine is present on Lys-5. The DNA-binding element occupies 120–137 (YCLTAPNYRLKSLQKKAS). Phosphoserine occurs at positions 149, 152, 155, and 158. The interval 149–176 (SVGSVTSRPSTPTLGTPTPQTMSVSTKV) is disordered. The segment covering 151–176 (GSVTSRPSTPTLGTPTPQTMSVSTKV) has biased composition (polar residues). Thr-159, Thr-161, Thr-164, and Thr-178 each carry phosphothreonine. A phosphoserine mark is found at Ser-181 and Ser-196. A compositionally biased stretch (polar residues) spans 232 to 243 (SSQNTANESSNA). Residues 232–264 (SSQNTANESSNALKRKREDDDDDDDDDDDYDNL) are disordered. The segment covering 250–264 (DDDDDDDDDDDYDNL) has biased composition (acidic residues).

The protein belongs to the TAF9 family. Component of the TFIID basal transcription factor complex, composed of TATA-box-binding protein TBP, and a number of TBP-associated factors (TAFs), including TAF1, TAF2, TAF3, TAF4, TAF5, TAF6, TAF7, TAF8, TAF9, TAF10, TAF11, TAF12 and TAF13. Component of the TATA-binding protein-free TAF complex (TFTC), the PCAF histone acetylase complex and the STAGA transcription coactivator-HAT complex. The PCAF complex consists at least of TADA2L/ADA2, SUPT3H/SPT3, TADA3L/ADA3, TAF5L/PAF65-beta, TAF6L/PAF65-alpha, TAF10/TAFII30, TAF12/TAFII20, TAF9/TAFII31 and TRRAP. The STAGA transcription coactivator-HAT complex consists at least of SUPT3H, GCN5L2, SUPT7L, TAF5L, TAF6L, TADA3L, TAD1L, TAF10, TAF12, TRRAP and TAF9. Binds N-terminal domain of p53/TP53 which is essential for transcription. Component of some MLL1/MLL complex, at least composed of the core components KMT2A/MLL1, ASH2L, HCFC1/HCF1, WDR5 and RBBP5, as well as the facultative components BACC1, CHD8, E2F6, HSP70, INO80C, KANSL1, LAS1L, MAX, MCRS1, MGA, MYST1/MOF, PELP1, PHF20, PRP31, RING2, RUVB1/TIP49A, RUVB2/TIP49B, SENP3, TAF1, TAF4, TAF6, TAF7, TAF9 and TEX10. Binds TFIIB and the Herpes simplex virus activator VP16. Forms a heterodimer with TAF6 in a complex with the TAF4B-TAF12 heterodimer. Also interacts with TAF5. Binds directly DNA. Increased DNA binding when complexed with TAF6.

The protein localises to the nucleus. Its function is as follows. The TFIID basal transcription factor complex plays a major role in the initiation of RNA polymerase II (Pol II)-dependent transcription. TFIID recognizes and binds promoters with or without a TATA box via its subunit TBP, a TATA-box-binding protein, and promotes assembly of the pre-initiation complex (PIC). The TFIID complex consists of TBP and TBP-associated factors (TAFs), including TAF1, TAF2, TAF3, TAF4, TAF5, TAF6, TAF7, TAF8, TAF9, TAF10, TAF11, TAF12 and TAF13. TAF9 is also a component of the TBP-free TAFII complex (TFTC), the PCAF histone acetylase complex and the STAGA transcription coactivator-HAT complex. TAF9 and its paralog TAF9B are involved in transcriptional activation as well as repression of distinct but overlapping sets of genes. Essential for cell viability. May have a role in gene regulation associated with apoptosis. This Homo sapiens (Human) protein is Transcription initiation factor TFIID subunit 9 (TAF9).